The sequence spans 345 residues: Anthranilate phosphoribosyltransferase (345 aa).

Residues Gly88, Gly91–Asp92, Thr96, Asn98–Thr101, Lys116–Gly124, and Ser128 each bind 5-phospho-alpha-D-ribose 1-diphosphate. Gly88 serves as a coordination point for anthranilate. Ser100 lines the Mg(2+) pocket. Asn119 is an anthranilate binding site. Position 174 (Arg174) interacts with anthranilate. Residues Asp233 and Glu234 each coordinate Mg(2+).

This sequence belongs to the anthranilate phosphoribosyltransferase family. In terms of assembly, homodimer. The cofactor is Mg(2+).

The enzyme catalyses N-(5-phospho-beta-D-ribosyl)anthranilate + diphosphate = 5-phospho-alpha-D-ribose 1-diphosphate + anthranilate. Its pathway is amino-acid biosynthesis; L-tryptophan biosynthesis; L-tryptophan from chorismate: step 2/5. In terms of biological role, catalyzes the transfer of the phosphoribosyl group of 5-phosphorylribose-1-pyrophosphate (PRPP) to anthranilate to yield N-(5'-phosphoribosyl)-anthranilate (PRA). The protein is Anthranilate phosphoribosyltransferase of Prochlorococcus marinus (strain NATL1A).